The primary structure comprises 1701 residues: Rho guanine nucleotide exchange factor TIAM2 (1701 aa).

4 disordered regions span residues 1–21, 201–250, 265–293, and 389–417; these read MGNSDSQYTLQGSKNHSNTIT, SPTL…SSWY, GSFLAPGMPDPSLHASFPPGDAKKPFNQS, and SLSRKKRKLQEPRSKEGSDYFDSRSDGLN. Gly-2 is lipidated: N-myristoyl glycine. Low complexity predominate over residues 238 to 248; that stretch reads SKGSSLSSESS. Residues 397–413 are compositionally biased toward basic and acidic residues; sequence LQEPRSKEGSDYFDSRS. A PH 1 domain is found at 506-620; that stretch reads VVRKAGWLFF…WVTAVHSACA (115 aa). Residues 628-695 are a coiled coil; it reads GKEDTLRLLK…KFHMDLFRMR (68 aa). Residues 810–881 enclose the RBD domain; that stretch reads IQTYVHFQDN…YMQQQVYDEI (72 aa). Positions 890–976 constitute a PDZ domain; that stretch reads DVQLTKTGSV…GLTLIARPPD (87 aa). The interval 1070–1092 is disordered; the sequence is DSQANGMEGPRENQDPPPRSLAR. One can recognise a DH domain in the interval 1099-1293; sequence RLRKVIQELV…EKVASHINEM (195 aa). The 132-residue stretch at 1347-1478 folds into the PH 2 domain; that stretch reads DLELTVFVFK…EKTCKDRLVP (132 aa). Disordered regions lie at residues 1500–1556 and 1568–1628; these read NSSS…GLAD and LSDE…PKLV. The span at 1513–1527 shows a compositional bias: low complexity; it reads GTLLDSDEGSLSSGT. Position 1583 is a phosphoserine (Ser-1583). A compositionally biased stretch (basic and acidic residues) spans 1596 to 1607; sequence RISEDPDVHPEA. Thr-1648 is subject to Phosphothreonine.

This sequence belongs to the TIAM family. As to quaternary structure, interacts with MAP1A, MAP1B, PARP1 and YWHAE. Interacts with CD44, PARD3 and MAPK8IP2. Phosphorylated on serine and threonine residues. Phosphorylated on Thr-1648 by Rho-kinase. Its phosphorylation by Rho-kinase inhibits its guanine nucleotide exchange activity, its interaction with MAP1A, MAP1B, PARP1 and YWHAE and reduces its ability to promote neurite growth. In terms of tissue distribution, expressed in the occipital, frontal and temporal lobes, cerebellum, putamen and testis.

It is found in the cytoplasm. The protein resides in the cell projection. Its subcellular location is the lamellipodium. It localises to the filopodium. The protein localises to the growth cone. It is found in the neuron projection. The protein resides in the perikaryon. Functionally, modulates the activity of RHO-like proteins and connects extracellular signals to cytoskeletal activities. Acts as a GDP-dissociation stimulator protein that stimulates the GDP-GTP exchange activity of RHO-like GTPases and activates them. Mediates extracellular laminin signals to activate Rac1, contributing to neurite growth. Involved in lamellipodial formation and advancement of the growth cone of embryonic hippocampal neurons. Promotes migration of neurons in the cerebral cortex. When overexpressed, induces membrane ruffling accompanied by the accumulation of actin filaments along the altered plasma membrane. Activates specifically RAC1, but not CDC42 and RHOA. In Homo sapiens (Human), this protein is Rho guanine nucleotide exchange factor TIAM2 (TIAM2).